The following is a 124-amino-acid chain: Fluoride-specific ion channel FluC (124 aa).

4 helical membrane passes run 4-24 (VLLVALGGSIGAVFRYLISIF), 35-55 (FGTLVVNVIGSFFMGVIYALG), 60-80 (ISPELKALIGVGLLGALTTFS), and 95-115 (WLKAILNVVLNLSLCLFMVYL). Residues Gly74 and Thr77 each coordinate Na(+).

The protein belongs to the fluoride channel Fluc/FEX (TC 1.A.43) family.

It localises to the cell inner membrane. It carries out the reaction fluoride(in) = fluoride(out). Its activity is regulated as follows. Na(+) is not transported, but it plays an essential structural role and its presence is essential for fluoride channel function. Fluoride-specific ion channel. Important for reducing fluoride concentration in the cell, thus reducing its toxicity. This chain is Fluoride-specific ion channel FluC, found in Shewanella putrefaciens (strain CN-32 / ATCC BAA-453).